We begin with the raw amino-acid sequence, 396 residues long: Probable mannan endo-1,4-beta-mannosidase A-2 (396 aa).

Residues 1–21 (MKVPRLLLALGGLASIHIASA) form the signal peptide. Substrate is bound at residue Trp99. Residue Asn120 is glycosylated (N-linked (GlcNAc...) asparagine). Asn212 provides a ligand contact to substrate. The active-site Proton donor is Glu213. N-linked (GlcNAc...) asparagine glycosylation is present at Asn270. Tyr288 is a binding site for substrate. The active-site Nucleophile is the Glu321. Residue Trp351 participates in substrate binding.

The protein belongs to the glycosyl hydrolase 5 (cellulase A) family.

It localises to the secreted. The enzyme catalyses Random hydrolysis of (1-&gt;4)-beta-D-mannosidic linkages in mannans, galactomannans and glucomannans.. Its function is as follows. Endo-1,4-mannanase, a crucial enzyme for depolymerization of seed galactomannans and wood galactoglucomannans. This Aspergillus terreus (strain NIH 2624 / FGSC A1156) protein is Probable mannan endo-1,4-beta-mannosidase A-2 (manA-2).